Here is a 294-residue protein sequence, read N- to C-terminus: Putative deoxyribonuclease TATDN3 (294 aa).

Residues His-9, His-11, Glu-104, His-144, His-167, and Asp-215 each coordinate Zn(2+).

This sequence belongs to the metallo-dependent hydrolases superfamily. TatD-type hydrolase family. Requires Mn(2+) as cofactor. The cofactor is Ca(2+). It depends on Mg(2+) as a cofactor. Zn(2+) serves as cofactor.

Its subcellular location is the nucleus. With respect to regulation, the 3'-exonuclease activity is sensitive to the metal ion present in the active site, whereas the AP endodeoxyribonuclease activity is observed in a variety of divalent metal cofactors. 3'-exoxonuclease activity is suppressed in the presence of Ca(2+), Zn(2+) and Ni(2+). In terms of biological role, exhibits 3'-exonuclease activities and apurinic/apyrimidinic (AP) endonuclease (in vitro). Show preferential AP endonuclease activity on double-stranded DNA substrates and 3'- exonuclease activity on single-stranded DNA. The chain is Putative deoxyribonuclease TATDN3 (Tatdn3) from Mus musculus (Mouse).